The sequence spans 454 residues: Gastrin/cholecystokinin type B receptor (454 aa).

The Extracellular segment spans residues 1–57 (MELLKPNRSVLGSGPGPGASLCRSGGPLLNGSGTGNLSCEPPRIRGAGTRELELAIR). N-linked (GlcNAc...) asparagine glycosylation is found at asparagine 7, asparagine 30, and asparagine 36. The chain crosses the membrane as a helical span at residues 58–79 (VTLYAVIFLMSVGGNVLIIVVL). At 80-87 (GLSRRLRT) the chain is on the cytoplasmic side. The helical transmembrane segment at 88 to 109 (VTNAFLLSLAVSDLLLAVACMP) threads the bilayer. The Extracellular portion of the chain corresponds to 110–131 (FTLLPNLMGTFIFGTVVCKAVS). Cysteine 127 and cysteine 205 are joined by a disulfide. Residues 132-150 (YFMGVSVSVSTLSLVAIAL) form a helical membrane-spanning segment. At 151–170 (ERYSAICRPLQARVWQTRSH) the chain is on the cytoplasmic side. The helical transmembrane segment at 171–189 (AARVIVATWMLSGLLMVPY) threads the bilayer. Residues 190 to 219 (PVYTAVQPAGPRVLQCMHRWPSARVRQTWS) lie on the Extracellular side of the membrane. A helical membrane pass occupies residues 220–242 (VLLLLLLFFVPGVVMAVAYGLIS). Topologically, residues 243–340 (RELYLGLRFD…KLLAKKRVVR (98 aa)) are cytoplasmic. The segment at 257–284 (SESQSRVGSQGGLPGGTGQGPAQANGRC) is disordered. Residues 265–275 (SQGGLPGGTGQ) show a composition bias toward gly residues. A helical membrane pass occupies residues 341–362 (MLLVIVVLFFLCWLPVYSANTW). Topologically, residues 363–380 (RAFDGPGAHRALSGAPIS) are extracellular. The chain crosses the membrane as a helical span at residues 381 to 401 (FIHLLTYASACVNPLVYCFMH). At 402–454 (RRFRQACLDTCTRCCPRPPRARPRPLPDEDPPTPSIASLSRLSYTTISTLGPG) the chain is on the cytoplasmic side. The S-palmitoyl cysteine moiety is linked to residue cysteine 415. The disordered stretch occupies residues 422 to 441 (ARPRPLPDEDPPTPSIASLS).

Belongs to the G-protein coupled receptor 1 family.

The protein resides in the cell membrane. Functionally, receptor for gastrin and cholecystokinin. The CCK-B receptors occur throughout the central nervous system where they modulate anxiety, analgesia, arousal, and neuroleptic activity. This receptor mediates its action by association with G proteins that activate a phosphatidylinositol-calcium second messenger system. The chain is Gastrin/cholecystokinin type B receptor (CCKBR) from Bos taurus (Bovine).